Reading from the N-terminus, the 640-residue chain is Threonine--tRNA ligase (640 aa).

The region spanning 1–61 is the TGS domain; the sequence is MPAITLPDGS…DADARLRFIT (61 aa). Positions 243 to 536 are catalytic; the sequence is DHRKIGRQMD…LIENCAGRFP (294 aa). Zn(2+) contacts are provided by cysteine 336, histidine 387, and histidine 513.

The protein belongs to the class-II aminoacyl-tRNA synthetase family. Homodimer. Zn(2+) serves as cofactor.

The protein resides in the cytoplasm. The enzyme catalyses tRNA(Thr) + L-threonine + ATP = L-threonyl-tRNA(Thr) + AMP + diphosphate + H(+). In terms of biological role, catalyzes the attachment of threonine to tRNA(Thr) in a two-step reaction: L-threonine is first activated by ATP to form Thr-AMP and then transferred to the acceptor end of tRNA(Thr). Also edits incorrectly charged L-seryl-tRNA(Thr). This Acidiphilium cryptum (strain JF-5) protein is Threonine--tRNA ligase.